Consider the following 122-residue polypeptide: Large ribosomal subunit protein uL14 (122 aa).

It belongs to the universal ribosomal protein uL14 family. In terms of assembly, part of the 50S ribosomal subunit. Forms a cluster with proteins L3 and L19. In the 70S ribosome, L14 and L19 interact and together make contacts with the 16S rRNA in bridges B5 and B8.

In terms of biological role, binds to 23S rRNA. Forms part of two intersubunit bridges in the 70S ribosome. This Acidothermus cellulolyticus (strain ATCC 43068 / DSM 8971 / 11B) protein is Large ribosomal subunit protein uL14.